A 383-amino-acid polypeptide reads, in one-letter code: Chaperone protein DnaJ (383 aa).

The region spanning 5–70 is the J domain; sequence DYYEVLGVAK…EKRAAYDRFG (66 aa). The segment at 139-217 adopts a CR-type zinc-finger fold; it reads GKTETIRIPT…CSGAGRVNRE (79 aa). Zn(2+) contacts are provided by Cys152, Cys155, Cys169, Cys172, Cys191, Cys194, Cys205, and Cys208. 4 CXXCXGXG motif repeats span residues 152–159, 169–176, 191–198, and 205–212; these read CEACSGTG, CSTCGGYG, CPNCHGRG, and CTACSGAG.

This sequence belongs to the DnaJ family. As to quaternary structure, homodimer. It depends on Zn(2+) as a cofactor.

It localises to the cytoplasm. In terms of biological role, participates actively in the response to hyperosmotic and heat shock by preventing the aggregation of stress-denatured proteins and by disaggregating proteins, also in an autonomous, DnaK-independent fashion. Unfolded proteins bind initially to DnaJ; upon interaction with the DnaJ-bound protein, DnaK hydrolyzes its bound ATP, resulting in the formation of a stable complex. GrpE releases ADP from DnaK; ATP binding to DnaK triggers the release of the substrate protein, thus completing the reaction cycle. Several rounds of ATP-dependent interactions between DnaJ, DnaK and GrpE are required for fully efficient folding. Also involved, together with DnaK and GrpE, in the DNA replication of plasmids through activation of initiation proteins. In Methylorubrum populi (strain ATCC BAA-705 / NCIMB 13946 / BJ001) (Methylobacterium populi), this protein is Chaperone protein DnaJ.